We begin with the raw amino-acid sequence, 278 residues long: NAD kinase (278 aa).

Residue Asp67 is the Proton acceptor of the active site. Residues 67 to 68, Arg72, 137 to 138, Lys148, Arg165, Asp167, 178 to 183, and Gln237 contribute to the NAD(+) site; these read DG, NE, and TGYALS.

It belongs to the NAD kinase family. A divalent metal cation is required as a cofactor.

It localises to the cytoplasm. It catalyses the reaction NAD(+) + ATP = ADP + NADP(+) + H(+). In terms of biological role, involved in the regulation of the intracellular balance of NAD and NADP, and is a key enzyme in the biosynthesis of NADP. Catalyzes specifically the phosphorylation on 2'-hydroxyl of the adenosine moiety of NAD to yield NADP. The polypeptide is NAD kinase (Thermococcus gammatolerans (strain DSM 15229 / JCM 11827 / EJ3)).